Consider the following 417-residue polypeptide: NADH-quinone oxidoreductase subunit D (417 aa).

It belongs to the complex I 49 kDa subunit family. In terms of assembly, NDH-1 is composed of 14 different subunits. Subunits NuoB, C, D, E, F, and G constitute the peripheral sector of the complex.

The protein resides in the cell inner membrane. It carries out the reaction a quinone + NADH + 5 H(+)(in) = a quinol + NAD(+) + 4 H(+)(out). Functionally, NDH-1 shuttles electrons from NADH, via FMN and iron-sulfur (Fe-S) centers, to quinones in the respiratory chain. The immediate electron acceptor for the enzyme in this species is believed to be ubiquinone. Couples the redox reaction to proton translocation (for every two electrons transferred, four hydrogen ions are translocated across the cytoplasmic membrane), and thus conserves the redox energy in a proton gradient. This Paraburkholderia phymatum (strain DSM 17167 / CIP 108236 / LMG 21445 / STM815) (Burkholderia phymatum) protein is NADH-quinone oxidoreductase subunit D.